Consider the following 279-residue polypeptide: Phage-like element PBSX protein XepA (279 aa).

It to B.subtilis YqxG/YqdC.

In terms of biological role, not known; does not seem to be involved in host cell lysis. This Bacillus subtilis (strain 168) protein is Phage-like element PBSX protein XepA (xepA).